We begin with the raw amino-acid sequence, 445 residues long: Dolichyl-diphosphooligosaccharide--protein glycosyltransferase 48 kDa subunit (445 aa).

A signal peptide spans 1–20; that stretch reads MRWLPGLLLIASIGFHQSLA. Residues 21–405 lie on the Lumenal side of the membrane; the sequence is DRVLVLGETA…YERFIRSAYP (385 aa). Residues 406 to 426 traverse the membrane as a helical segment; sequence YYASSFSMMAGLVLFSIVYLY. Topologically, residues 427 to 445 are cytoplasmic; that stretch reads HKDTPVKGAKVLDSEKKKN.

This sequence belongs to the DDOST 48 kDa subunit family. As to quaternary structure, component of the oligosaccharyltransferase (OST) complex.

The protein localises to the endoplasmic reticulum membrane. Its pathway is protein modification; protein glycosylation. Subunit of the oligosaccharyl transferase (OST) complex that catalyzes the initial transfer of a defined glycan (Glc(3)Man(9)GlcNAc(2) in eukaryotes) from the lipid carrier dolichol-pyrophosphate to an asparagine residue within an Asn-X-Ser/Thr consensus motif in nascent polypeptide chains, the first step in protein N-glycosylation. N-glycosylation occurs cotranslationally and the complex associates with the Sec61 complex at the channel-forming translocon complex that mediates protein translocation across the endoplasmic reticulum (ER). All subunits are required for a maximal enzyme activity. Required for the assembly of both SST3A- and SS3B-containing OST complexes. Required for normal lifespan. This is Dolichyl-diphosphooligosaccharide--protein glycosyltransferase 48 kDa subunit from Caenorhabditis elegans.